A 330-amino-acid polypeptide reads, in one-letter code: Clp protease adapter protein ClpF, chloroplastic (330 aa).

The transit peptide at 1-65 directs the protein to the chloroplast; sequence MVQSQSLSTL…KSLKQRNLLR (65 aa). Residues 66–138 are NTD, required for CLPS1-binding; that stretch reads VEARWPFQGG…VEEESIRLQE (73 aa). Coiled coils occupy residues 112–139 and 175–195; these read NLEQYDIAQQLREKLTEVEEESIRLQEG and AAKLRDEISKLEAESLAVSAK. The UVR domain maps to 153 to 188; the sequence is GISIIRLRADLQNAIDSEDYGLAAKLRDEISKLEAE. The yccV-like stretch occupies residues 203 to 310; that stretch reads EYAFRLGQKL…TAGDFIPVKQ (108 aa).

Binds to CLPC1 and CLPC2. Interacts with ClpS1; this interaction stimulates their association with ClpC. Associates with the Clp substrate HEMA1 (GluTR). In terms of tissue distribution, expressed constitutively in photosynthetic tissues such as leaves, stems and flowers, and, at low levels, in siliques.

Its subcellular location is the plastid. It is found in the chloroplast. Its function is as follows. Clp protease adapter that facilitates CLPS1 recruitment to ClpC chaperones thus forming a binary adapter for selective substrate recognition and delivery to plastid Clp protease system (CLPC). In Arabidopsis thaliana (Mouse-ear cress), this protein is Clp protease adapter protein ClpF, chloroplastic.